A 579-amino-acid polypeptide reads, in one-letter code: Mitogen-activated protein kinase kinase kinase 7 (579 aa).

The tract at residues 1-300 (MSTASAASSS…FPGADEPLQY (300 aa)) is interaction with MAPK8IP1. Residues 36 to 291 (IEVEEVVGRG…KIMTHLMRYF (256 aa)) form the Protein kinase domain. ATP contacts are provided by residues 42–50 (VGRGAFGVV) and lysine 63. A Glycyl lysine isopeptide (Lys-Gly) (interchain with G-Cter in ubiquitin) cross-link involves residue lysine 72. The active-site Proton acceptor is aspartate 156. Residue lysine 158 forms a Glycyl lysine isopeptide (Lys-Gly) (interchain with G-Cter in ubiquitin) linkage. Phosphothreonine; by autocatalysis occurs at positions 184 and 187. At serine 192 the chain carries Phosphoserine; by autocatalysis. Residue lysine 209 forms a Glycyl lysine isopeptide (Lys-Gly) (interchain with G-Cter in ubiquitin) linkage. 2 disordered regions span residues 301 to 338 (PCQYSDEGQSNSATSTGSFMDIASTNTSNKSDTNMEQV) and 354 to 391 (KNQAKQQSESGRLSLGASRGSSVESLPPTSEGKRMSAD). The segment covering 306 to 338 (DEGQSNSATSTGSFMDIASTNTSNKSDTNMEQV) has biased composition (polar residues). Residues 361 to 375 (SESGRLSLGASRGSS) are compositionally biased toward low complexity. A phosphoserine mark is found at serine 367, serine 389, and serine 412. The segment covering 416–425 (LTVTGTEPGQ) has biased composition (polar residues). The disordered stretch occupies residues 416 to 466 (LTVTGTEPGQVSSRSSSPSVRMITTSGPTSEKPARSHPWTPDDSTDTNGSD). A compositionally biased stretch (low complexity) spans 426-436 (VSSRSSSPSVR). At serine 428 the chain carries Phosphoserine.

This sequence belongs to the protein kinase superfamily. STE Ser/Thr protein kinase family. MAP kinase kinase kinase subfamily. In terms of assembly, can form homodimer. Binds both upstream activators and downstream substrates in multimolecular complexes. Interacts with TAB1/MAP3K7IP1, TAB2/MAP3K7IP2 and TAB3/MAP3K7IP3. Identified in the TRIKA2 complex composed of MAP3K7/TAK1, TAB1/MAP3K7IP1 and TAB2/MAP3K7IP2. Interacts with PPM1L and PPM1B/PP2CB. Interaction with PP2A and PPP6C leads to its repressed activity. Interacts with TRAF6 and TAB1/MAP3K7IP1; during IL-1 signaling. Interacts with TAOK1 and TAOK2; interaction with TAOK2 interferes with MAP3K7 interaction with IKKA, thus preventing NF-kappa-B activation. Interacts with DYNC2I2 (via WD domains). Interacts with CYLD and RBCK1. Interacts with TGFBR1; induces MAP3K7/TAK1 activation by TRAF6. Interacts with MAPK8IP1 and SMAD6. Interacts with isoform 1 of VRK2. Interacts with DAB2; the interaction is induced by TGF-beta stimulation and may mediate TGF-beta stimulated JNK activation. Interacts with TRIM5. Part of a complex containing ITCH, NDFIP1 and MAP3K7. Interacts with PLEKHM1 (via N- and C-terminus). Interacts with TRIM8. Found in a complex with SH3RF1, RAC2, MAP2K7/MKK7, MAPK8IP1/JIP1, MAPK8/JNK1 and MAPK9/JNK2. Interacts with SASH1. Interacts with RIPK1. Mg(2+) serves as cofactor. Association with TAB1/MAP3K7IP1 promotes autophosphorylation and subsequent activation. Association with TAB2/MAP3K7IP2, itself associated with free unanchored Lys-63 polyubiquitin chain, promotes autophosphorylation and subsequent activation of MAP3K7. Dephosphorylation at Thr-187 by PP2A and PPP6C leads to inactivation. In terms of processing, 'Lys-48'-linked polyubiquitination at Lys-72 is induced by TNFalpha, and leads to proteasomal degradation. Undergoes 'Lys-48'-linked polyubiquitination catalyzed by ITCH. 'Lys-63'-linked polyubiquitination at Lys-158 by TRIM8 does not lead to proteasomal degradation but contributes to autophosphorylation and activation. Deubiquitinated by CYLD, a protease that selectively cleaves 'Lys-63'-linked ubiquitin chains.Deubiquitinated by USP19; leading to negative regulation of TNF-alpha- and IL-1beta-triggered NF-kappa-B activation.

It localises to the cytoplasm. It is found in the cell membrane. The enzyme catalyses L-seryl-[protein] + ATP = O-phospho-L-seryl-[protein] + ADP + H(+). It carries out the reaction L-threonyl-[protein] + ATP = O-phospho-L-threonyl-[protein] + ADP + H(+). Activated by pro-inflammatory cytokines and in response to physical and chemical stresses, including osmotic stress, oxidative stress, arsenic and ultraviolet light irradiation. Activated by 'Lys-63'-linked polyubiquitination and by autophosphorylation. Association with TAB1/MAP3K7IP1 and TAB2/MAP3K7IP2 promotes activation through autophosphorylation, whereas PPM1B/PP2CB, PP2A and PPP6C dephosphorylation leads to inactivation. Ceramides are also able to activate MAP3K7/TAK1. Serine/threonine kinase which acts as an essential component of the MAP kinase signal transduction pathway. Plays an important role in the cascades of cellular responses evoked by changes in the environment. Mediates signal transduction of TRAF6, various cytokines including interleukin-1 (IL-1), transforming growth factor-beta (TGFB), TGFB-related factors like BMP2 and BMP4, toll-like receptors (TLR), tumor necrosis factor receptor CD40 and B-cell receptor (BCR). Once activated, acts as an upstream activator of the MKK/JNK signal transduction cascade and the p38 MAPK signal transduction cascade through the phosphorylation and activation of several MAP kinase kinases like MAP2K1/MEK1, MAP2K3/MKK3, MAP2K6/MKK6 and MAP2K7/MKK7. These MAP2Ks in turn activate p38 MAPKs and c-jun N-terminal kinases (JNKs); both p38 MAPK and JNK pathways control the transcription factors activator protein-1 (AP-1). Independently of MAP2Ks and p38 MAPKs, acts as a key activator of NF-kappa-B by promoting activation of the I-kappa-B-kinase (IKK) core complex. Mechanistically, recruited to polyubiquitin chains of RIPK2 and IKBKG/NEMO via TAB2/MAP3K7IP2 and TAB3/MAP3K7IP3, and catalyzes phosphorylation and activation of IKBKB/IKKB component of the IKK complex, leading to NF-kappa-B activation. In osmotic stress signaling, plays a major role in the activation of MAPK8/JNK1, but not that of NF-kappa-B. Promotes TRIM5 capsid-specific restriction activity. Phosphorylates RIPK1 at 'Ser-321' which positively regulates RIPK1 interaction with RIPK3 to promote necroptosis but negatively regulates RIPK1 kinase activity and its interaction with FADD to mediate apoptosis. Phosphorylates STING1 in response to cGAMP-activation, promoting association between STEEP1 and STING1 and STING1 translocation to COPII vesicles. This chain is Mitogen-activated protein kinase kinase kinase 7 (Map3k7), found in Mus musculus (Mouse).